The sequence spans 367 residues: Putative zinc metalloprotease mll0638 (367 aa).

Position 20 (histidine 20) interacts with Zn(2+). Residue glutamate 21 is part of the active site. Histidine 24 is a binding site for Zn(2+). 3 helical membrane passes run 108-130 (ATVVAGPLFNFLLTIVVFSVLFA), 291-313 (LGFEWLVQLVALLSVGIGFLNLL), and 343-365 (MAYRAGLLLVLCFMGFVFWNDLF). In terms of domain architecture, PDZ spans 121–196 (TIVVFSVLFA…ITFVMLRDGK (76 aa)).

Belongs to the peptidase M50B family. The cofactor is Zn(2+).

The protein localises to the cell inner membrane. The protein is Putative zinc metalloprotease mll0638 of Mesorhizobium japonicum (strain LMG 29417 / CECT 9101 / MAFF 303099) (Mesorhizobium loti (strain MAFF 303099)).